We begin with the raw amino-acid sequence, 1612 residues long: uncharacterized protein (1612 aa).

Residues 23 to 52 (ENKNIEMTTLKDKKEMKNENLSKINVKKEN) are a coiled coil. Over residues 46 to 93 (INVKKENHDKNHDKNHDKNHDKNHDKNHDKNHDKNHDKNHDKNHDKNH) the composition is skewed to basic and acidic residues. Disordered regions lie at residues 46 to 94 (INVK…KNHV) and 369 to 400 (EDDN…HEIQ). The span at 375 to 394 (DNPLYSNNNTLKEQNTSTPL) shows a compositional bias: polar residues. The chain crosses the membrane as a helical span at residues 479-499 (FIVTLSEICLILTPHYVNIIN). Disordered regions lie at residues 698-777 (TSLT…EKKL), 992-1037 (NELD…KNDP), 1091-1157 (SGKS…RNMS), and 1257-1291 (NQTT…NQDK). The segment covering 708–777 (KNDEIKKTGE…KKKTGEEKKL (70 aa)) has biased composition (basic and acidic residues). Composition is skewed to low complexity over residues 996–1028 (NNNN…NNNN), 1102–1140 (SNNN…NSTN), and 1257–1271 (NQTT…QTSN). Coiled-coil stretches lie at residues 1338–1362 (YCNN…INNK), 1444–1469 (SNKK…IDND), and 1553–1601 (NMED…KFLT). Residues 1554-1566 (MEDEKNEKLNDKE) are compositionally biased toward basic and acidic residues. The tract at residues 1554-1612 (MEDEKNEKLNDKEGEYEDVTENLNEQEAEEEAEEEAEEEEEEEDKFLTPEHLPINVEIK) is disordered. Residues 1567-1597 (GEYEDVTENLNEQEAEEEAEEEAEEEEEEED) show a composition bias toward acidic residues.

It is found in the membrane. This is an uncharacterized protein from Plasmodium falciparum (isolate 3D7).